Consider the following 106-residue polypeptide: Large ribosomal subunit protein P2A (106 aa).

K2 is covalently cross-linked (Glycyl lysine isopeptide (Lys-Gly) (interchain with G-Cter in ubiquitin)). T16 is subject to Phosphothreonine. 2 positions are modified to phosphoserine: S40 and S43. A Glycyl lysine isopeptide (Lys-Gly) (interchain with G-Cter in ubiquitin) cross-link involves residue K48. S49 bears the Phosphoserine mark. A compositionally biased stretch (low complexity) spans 65–82 (PAAGPASAGGAAAASGDA). The segment at 65–106 (PAAGPASAGGAAAASGDAAAEEEKEEEAAEESDDDMGFGLFD) is disordered. Positions 83–100 (AAEEEKEEEAAEESDDDM) are enriched in acidic residues. S96 is subject to Phosphoserine.

Belongs to the eukaryotic ribosomal protein P1/P2 family. Component of the large ribosomal subunit (LSU). Mature yeast ribosomes consist of a small (40S) and a large (60S) subunit. The 40S small subunit contains 1 molecule of ribosomal RNA (18S rRNA) and 33 different proteins (encoded by 57 genes). The large 60S subunit contains 3 rRNA molecules (25S, 5.8S and 5S rRNA) and 46 different proteins (encoded by 81 genes). The 5 acidic ribosomal P-proteins form the stalk structure of the 60S subunit. They are organized as a pentameric complex in which uL10/P0 interacts with 2 heterodimers, P1A-P2B and P1B-P2A. Post-translationally, phosphorylation is not involved in the interaction of the acidic P proteins with the ribosome, however it is suggested to affect the ribosome activity and to participate in a possible ribosome regulatory mechanism. In terms of processing, the N-terminus is not modified.

It localises to the cytoplasm. Its function is as follows. Component of the ribosome, a large ribonucleoprotein complex responsible for the synthesis of proteins in the cell. The small ribosomal subunit (SSU) binds messenger RNAs (mRNAs) and translates the encoded message by selecting cognate aminoacyl-transfer RNA (tRNA) molecules. The large subunit (LSU) contains the ribosomal catalytic site termed the peptidyl transferase center (PTC), which catalyzes the formation of peptide bonds, thereby polymerizing the amino acids delivered by tRNAs into a polypeptide chain. The nascent polypeptides leave the ribosome through a tunnel in the LSU and interact with protein factors that function in enzymatic processing, targeting, and the membrane insertion of nascent chains at the exit of the ribosomal tunnel. The protein is Large ribosomal subunit protein P2A of Saccharomyces cerevisiae (strain ATCC 204508 / S288c) (Baker's yeast).